The sequence spans 473 residues: Ribulose bisphosphate carboxylase large chain (473 aa).

The propeptide occupies 1–2 (MS). An N-acetylproline modification is found at Pro3. An N6,N6,N6-trimethyllysine modification is found at Lys14. The substrate site is built by Asn123 and Thr173. Lys175 (proton acceptor) is an active-site residue. Position 177 (Lys177) interacts with substrate. Mg(2+) is bound by residues Lys201, Asp203, and Glu204. Lys201 is modified (N6-carboxylysine). His294 functions as the Proton acceptor in the catalytic mechanism. Substrate-binding residues include Arg295, His327, and Ser379.

It belongs to the RuBisCO large chain family. Type I subfamily. As to quaternary structure, heterohexadecamer of 8 large chains and 8 small chains; disulfide-linked. The disulfide link is formed within the large subunit homodimers. Mg(2+) serves as cofactor. Post-translationally, the disulfide bond which can form in the large chain dimeric partners within the hexadecamer appears to be associated with oxidative stress and protein turnover.

It localises to the plastid. Its subcellular location is the chloroplast. The catalysed reaction is 2 (2R)-3-phosphoglycerate + 2 H(+) = D-ribulose 1,5-bisphosphate + CO2 + H2O. The enzyme catalyses D-ribulose 1,5-bisphosphate + O2 = 2-phosphoglycolate + (2R)-3-phosphoglycerate + 2 H(+). Its function is as follows. RuBisCO catalyzes two reactions: the carboxylation of D-ribulose 1,5-bisphosphate, the primary event in carbon dioxide fixation, as well as the oxidative fragmentation of the pentose substrate in the photorespiration process. Both reactions occur simultaneously and in competition at the same active site. The sequence is that of Ribulose bisphosphate carboxylase large chain from Monarda didyma (Scarlet bee-balm).